Reading from the N-terminus, the 555-residue chain is B3 domain-containing protein REM10 (555 aa).

4 DNA-binding regions (TF-B3) span residues 11–103, 150–247, 276–372, and 460–554; these read NPQF…LGPS, CFVA…FPMT, SFVA…LPLN, and SQNR…FCSK.

It localises to the nucleus. This Arabidopsis thaliana (Mouse-ear cress) protein is B3 domain-containing protein REM10 (REM10).